Consider the following 981-residue polypeptide: Peroxisomal ATPase PEX6 (981 aa).

Arg-119 carries the omega-N-methylarginine modification. Residues Gly-471 to Thr-478 and Gly-745 to Thr-752 contribute to the ATP site.

Belongs to the AAA ATPase family. As to quaternary structure, interacts with PEX1; forming the PEX1-PEX6 AAA ATPase complex, which is composed of a heterohexamer formed by a trimer of PEX1-PEX6 dimers. Interacts with PEX26; interaction is direct and promotes recruitment to peroxisomal membranes. Interacts with ZFAND6. In terms of tissue distribution, in the teeth, expressed in ameloblasts and odontoblasts. Expressed in the retina, at higher levels in the ganglion cell layer and photoreceptor layer at the joint between the outer and inner segments.

The protein resides in the cytoplasm. The protein localises to the cytosol. It is found in the peroxisome membrane. Its subcellular location is the cell projection. It localises to the cilium. The protein resides in the photoreceptor outer segment. It catalyses the reaction ATP + H2O = ADP + phosphate + H(+). Functionally, component of the PEX1-PEX6 AAA ATPase complex, a protein dislocase complex that mediates the ATP-dependent extraction of the PEX5 receptor from peroxisomal membranes, an essential step for PEX5 recycling. Specifically recognizes PEX5 monoubiquitinated at 'Cys-11', and pulls it out of the peroxisome lumen through the PEX2-PEX10-PEX12 retrotranslocation channel. Extraction by the PEX1-PEX6 AAA ATPase complex is accompanied by unfolding of the TPR repeats and release of bound cargo from PEX5. This Mus musculus (Mouse) protein is Peroxisomal ATPase PEX6.